Reading from the N-terminus, the 165-residue chain is Probable chemoreceptor glutamine deamidase CheD (165 aa).

Belongs to the CheD family.

It carries out the reaction L-glutaminyl-[protein] + H2O = L-glutamyl-[protein] + NH4(+). In terms of biological role, probably deamidates glutamine residues to glutamate on methyl-accepting chemotaxis receptors (MCPs), playing an important role in chemotaxis. In Geobacillus kaustophilus (strain HTA426), this protein is Probable chemoreceptor glutamine deamidase CheD.